The chain runs to 135 residues: Ribonuclease VapC26 (135 aa).

Residues 1–118 (MIIDTSALLA…TRTILTLDRR (118 aa)) form the PINc domain. Positions 4 and 97 each coordinate Mg(2+).

Belongs to the PINc/VapC protein family. Mg(2+) is required as a cofactor.

In terms of biological role, toxic component of a type II toxin-antitoxin (TA) system. An RNase. Upon expression in M.smegmatis inhibits colony formation. Its toxic effect is neutralized by coexpression with cognate antitoxin VapB26. In Mycobacterium tuberculosis (strain ATCC 25618 / H37Rv), this protein is Ribonuclease VapC26.